The sequence spans 387 residues: Eukaryotic translation initiation factor 3 subunit M (387 aa).

Residues 181–340 form the PCI domain; sequence RSSKVMIELL…RKVHISSTMH (160 aa).

It belongs to the eIF-3 subunit M family. As to quaternary structure, component of the eukaryotic translation initiation factor 3 (eIF-3) complex. The eIF-3 complex interacts with pix.

It is found in the cytoplasm. The protein localises to the golgi apparatus. Component of the eukaryotic translation initiation factor 3 (eIF-3) complex, which is involved in protein synthesis of a specialized repertoire of mRNAs and, together with other initiation factors, stimulates binding of mRNA and methionyl-tRNAi to the 40S ribosome. The eIF-3 complex specifically targets and initiates translation of a subset of mRNAs involved in cell proliferation. This chain is Eukaryotic translation initiation factor 3 subunit M, found in Drosophila willistoni (Fruit fly).